The following is an 833-amino-acid chain: MLPFGDKTRDMVNAWFSERVHNIPVCKEGIRAHTESCSCSLPQSPHADNTTPGAPARKISASEFDRPLRPIVVKDSEGTVSFLSDSGKKEQMPLTSPRFDSDEGDQCSRLLELVKDISSHLDVTALCHKIFLHIHGLISADRYSLFLVCEDSSKDKFLVSRLFDVAEGSTLEEASNNCIRLEWNKGIVGHVAAFGEPLNIKDAYEDPRFNAEVDQITGYKTQSILCMPIKNHREEVVGVAQAINKKSGNGGTFTEKDEKDFAAYLAFCGIVLHNAQLYETSLLENKRNQVLLDLASLIFEEQQSLEVILKKIAATIISFMQVQKCTIFIVDEDCPDSFSRVFQMEWEEVGKSSEPLTREHDANKINYMYAQYVKNTMEPLNIPDVTKDNRFPWTNENMGHINTHCIRSLLCTPIKNGKKNKVIGVCQLVNKMEEKTGKIKAFNQNDEQFLEAFVIFCGLGIQNTQMYEAVERAMAKQMVTLEVLSYHASAAEEETRELQALAAAVVPSAQTLKITDFSFSDFELSDLETALCTIRMFTDLNLVQNFQMKHEVLCRWILSVKKNYRKNVAYHNWRHAFNTAQCMFAALKAGKIQNKLTDLETLALLIAALSHDLDHRGVNNSYIQRSEHPLAQLYCHSTMEHHHFDQCLMVLNSPGNQILSGLSIEEYKTTLKIIKQAILATDLALYIKRRGEFFELIRKNEFSFEDPLQKELFLAMLMTACDLSAITKPWPIQQRIAELVAAEFFDQGDRERKELNMEPADLMNREKKNKIPSMQVGFIDAICLQLYEALTHVSEDCLPLLDGCRKNRQKWQALADQQEKTLLNGESGQAKRD.

The residue at position 60 (Ser-60) is a Phosphoserine. The tract at residues 82–101 is disordered; the sequence is FLSDSGKKEQMPLTSPRFDS. GAF domains follow at residues 122–272 and 304–461; these read DVTA…GIVL and SLEV…GLGI. The PDEase domain occupies 494-818; that stretch reads ETRELQALAA…QKWQALADQQ (325 aa). Catalysis depends on His-571, which acts as the Proton donor. Residues His-575, His-611, Asp-612, and Asp-722 each contribute to the Zn(2+) site. A Mg(2+)-binding site is contributed by Asp-612. Residue Gln-775 participates in 3',5'-cyclic GMP binding.

Belongs to the cyclic nucleotide phosphodiesterase family. Zn(2+) is required as a cofactor. Mg(2+) serves as cofactor. Post-translationally, phosphorylation is regulated by binding of cGMP to the two allosteric sites. Phosphorylation by PRKG1 leads to its activation.

The catalysed reaction is 3',5'-cyclic GMP + H2O = GMP + H(+). It participates in purine metabolism; 3',5'-cyclic GMP degradation; GMP from 3',5'-cyclic GMP: step 1/1. Its function is as follows. Plays a role in signal transduction by regulating the intracellular concentration of cyclic nucleotides. This phosphodiesterase catalyzes the specific hydrolysis of cGMP to 5'-GMP. Specifically regulates nitric-oxide-generated cGMP. The sequence is that of cGMP-specific 3',5'-cyclic phosphodiesterase (Pde5a) from Rattus norvegicus (Rat).